Reading from the N-terminus, the 123-residue chain is WAP four-disulfide core domain protein 5 (123 aa).

The signal sequence occupies residues 1–24; sequence MRIQSLLLLGALLAVGSQLPAVFG. WAP domains follow at residues 27-73 and 74-121; these read KGEK…CIPR and VSVK…RDPA. 8 disulfides stabilise this stretch: Cys34–Cys62, Cys41–Cys66, Cys49–Cys61, Cys55–Cys70, Cys81–Cys109, Cys88–Cys113, Cys96–Cys108, and Cys102–Cys117.

The protein localises to the secreted. Functionally, putative acid-stable proteinase inhibitor. This chain is WAP four-disulfide core domain protein 5 (WFDC5), found in Macaca mulatta (Rhesus macaque).